Here is a 740-residue protein sequence, read N- to C-terminus: Ethylene receptor 1 (740 aa).

3 helical membrane-spanning segments follow: residues 23–43 (ISDF…IYFV), 53–73 (WVLV…LINL), and 92–112 (VLTA…IPDL). Cu cation-binding residues include C65 and H69. Residues 158–307 (DRHTILKTTL…VVADQVAVAL (150 aa)) form the GAF domain. The 239-residue stretch at 350-588 (VMNHEMRTPM…TFIVKLGIAE (239 aa)) folds into the Histidine kinase domain. H353 bears the Phosphohistidine; by autocatalysis mark. Residues 614–731 (KVLVMDDNGV…KMRSVLSELI (118 aa)) enclose the Response regulatory domain. 4-aspartylphosphate is present on D662.

It belongs to the ethylene receptor family. Homodimer; disulfide-linked. It depends on Cu cation as a cofactor. Activation probably requires a transfer of a phosphate group between a His in the transmitter domain and an Asp of the receiver domain.

It is found in the endoplasmic reticulum membrane. The catalysed reaction is ATP + protein L-histidine = ADP + protein N-phospho-L-histidine.. In terms of biological role, may act early in the ethylene signal transduction pathway, possibly as an ethylene receptor, or as a regulator of the pathway. In Cucumis sativus (Cucumber), this protein is Ethylene receptor 1 (ETR1).